Here is a 1150-residue protein sequence, read N- to C-terminus: Rho-type GTPase-activating protein 1 (1150 aa).

Residues 1-10 (MSQRDAKKDG) show a composition bias toward basic and acidic residues. The disordered stretch occupies residues 1-78 (MSQRDAKKDG…AESRKALPNQ (78 aa)). Residues 40-62 (TTKNFPHSRHTSTVAGTEGGSSL) are compositionally biased toward polar residues. LIM zinc-binding domains are found at residues 114 to 177 (KICA…RRLD), 178 to 238 (LLCA…LFAA), and 483 to 546 (DLCY…SSNV). A disordered region spans residues 586 to 683 (SQRKPLSVDP…SHGGSITGKS (98 aa)). A compositionally biased stretch (polar residues) spans 598 to 617 (ENVSSTVETAKQAETTASSD). Positions 642–655 (SNETQSSSNSTETS) are enriched in low complexity. Phosphoserine is present on Ser690. Residues 726–759 (AFRHMPSYTDPSYRKNSGAIYDKNDGTQKGLTPK) form a disordered region. Positions 837 to 1038 (VPLEILVERN…LLIENFEKFC (202 aa)) constitute a Rho-GAP domain. Disordered stretches follow at residues 1078-1097 (LDER…RQPI) and 1104-1150 (LTSD…IRDS). Basic residues predominate over residues 1088-1097 (ASTKRKRQPI). Residues 1104–1134 (LTSDVPSGSEVADTNSLSSTTKDEASPNSDA) are compositionally biased toward polar residues.

The protein resides in the cell tip. The protein localises to the nucleus. Its function is as follows. GTPase-activating protein for Rho1. Involved in the F-actin patch localization, cell morphogenesis, regulation of septation, and cell wall synthesis. This Schizosaccharomyces pombe (strain 972 / ATCC 24843) (Fission yeast) protein is Rho-type GTPase-activating protein 1 (rga1).